Reading from the N-terminus, the 534-residue chain is CTP synthase (534 aa).

Residues Met1 to Leu268 form an amidoligase domain region. A CTP-binding site is contributed by Ser14. Residue Ser14 participates in UTP binding. An ATP-binding site is contributed by Gly15–Ile20. Tyr55 is a binding site for L-glutamine. Asp72 is an ATP binding site. Asp72 and Glu142 together coordinate Mg(2+). CTP contacts are provided by residues Asp149–Glu151, Lys189–Gln194, and Lys225. Residues Lys189–Gln194 and Lys225 each bind UTP. Residues Thr293–Lys534 form the Glutamine amidotransferase type-1 domain. Gly355 contacts L-glutamine. The Nucleophile; for glutamine hydrolysis role is filled by Cys382. L-glutamine contacts are provided by residues Leu383 to Gln386, Glu406, and Arg462. Catalysis depends on residues His507 and Glu509.

Belongs to the CTP synthase family. In terms of assembly, homotetramer.

It carries out the reaction UTP + L-glutamine + ATP + H2O = CTP + L-glutamate + ADP + phosphate + 2 H(+). The catalysed reaction is L-glutamine + H2O = L-glutamate + NH4(+). The enzyme catalyses UTP + NH4(+) + ATP = CTP + ADP + phosphate + 2 H(+). It participates in pyrimidine metabolism; CTP biosynthesis via de novo pathway; CTP from UDP: step 2/2. With respect to regulation, allosterically activated by GTP, when glutamine is the substrate; GTP has no effect on the reaction when ammonia is the substrate. The allosteric effector GTP functions by stabilizing the protein conformation that binds the tetrahedral intermediate(s) formed during glutamine hydrolysis. Inhibited by the product CTP, via allosteric rather than competitive inhibition. Its function is as follows. Catalyzes the ATP-dependent amination of UTP to CTP with either L-glutamine or ammonia as the source of nitrogen. Regulates intracellular CTP levels through interactions with the four ribonucleotide triphosphates. The protein is CTP synthase of Ruminiclostridium cellulolyticum (strain ATCC 35319 / DSM 5812 / JCM 6584 / H10) (Clostridium cellulolyticum).